A 445-amino-acid polypeptide reads, in one-letter code: Glutamyl-tRNA(Gln) amidotransferase subunit D (445 aa).

The Asparaginase/glutaminase domain maps to 93-425; sequence SEIKIISTGG…EKIRSLMISN (333 aa). Active-site residues include Thr-103, Thr-179, Asp-180, and Lys-258.

This sequence belongs to the asparaginase 1 family. GatD subfamily. Heterodimer of GatD and GatE.

The catalysed reaction is L-glutamyl-tRNA(Gln) + L-glutamine + ATP + H2O = L-glutaminyl-tRNA(Gln) + L-glutamate + ADP + phosphate + H(+). Its function is as follows. Allows the formation of correctly charged Gln-tRNA(Gln) through the transamidation of misacylated Glu-tRNA(Gln) in organisms which lack glutaminyl-tRNA synthetase. The reaction takes place in the presence of glutamine and ATP through an activated gamma-phospho-Glu-tRNA(Gln). The GatDE system is specific for glutamate and does not act on aspartate. The polypeptide is Glutamyl-tRNA(Gln) amidotransferase subunit D (Saccharolobus islandicus (strain L.S.2.15 / Lassen #1) (Sulfolobus islandicus)).